The following is a 271-amino-acid chain: 2-aminophenol 1,6-dioxygenase subunit alpha (271 aa).

It belongs to the LigB/MhpB extradiol dioxygenase family. The APD complex is a heterotetramer of 2 alpha (CnbCa) and 2 beta (CnbCb) subunits.

It participates in xenobiotic degradation; nitrobenzene degradation. Its pathway is xenobiotic degradation; 4-chloronitrobenzene degradation. In terms of biological role, component of the 2-aminophenol 1,6-dioxygenase (APD) complex that catalyzes the ring fission of 2-aminophenol to produce 2-aminomuconic semialdehyde. CnbCa may have a role in the stability of the complex. The complex is also active on other substrates such as 2-amino-5-chlorophenol (68% activity), protocatechuate (33% activity) and catechol (5% activity). Both 2-aminophenol and 2-amino-5-cholorophenol are likely native substrates for this dioxygenase which is involved in the reductive degradation pathway of both nitrobenzene (NB) and 4-chloronitrobenzene (4-CNB), allowing C.testosteroni strain CNB-1 to grow on these compounds as sole source of carbon, nitrogen, and energy. The chain is 2-aminophenol 1,6-dioxygenase subunit alpha from Comamonas testosteroni (Pseudomonas testosteroni).